Here is a 185-residue protein sequence, read N- to C-terminus: Ribosome-recycling factor (185 aa).

It belongs to the RRF family.

It is found in the cytoplasm. Functionally, responsible for the release of ribosomes from messenger RNA at the termination of protein biosynthesis. May increase the efficiency of translation by recycling ribosomes from one round of translation to another. The sequence is that of Ribosome-recycling factor from Rhodococcus erythropolis (strain PR4 / NBRC 100887).